The sequence spans 368 residues: Aminomethyltransferase (368 aa).

Belongs to the GcvT family. As to quaternary structure, the glycine cleavage system is composed of four proteins: P, T, L and H.

The catalysed reaction is N(6)-[(R)-S(8)-aminomethyldihydrolipoyl]-L-lysyl-[protein] + (6S)-5,6,7,8-tetrahydrofolate = N(6)-[(R)-dihydrolipoyl]-L-lysyl-[protein] + (6R)-5,10-methylene-5,6,7,8-tetrahydrofolate + NH4(+). Its function is as follows. The glycine cleavage system catalyzes the degradation of glycine. This chain is Aminomethyltransferase, found in Xylella fastidiosa (strain 9a5c).